We begin with the raw amino-acid sequence, 404 residues long: Trigger factor (404 aa).

Residues 160 to 225 form the PPIase FKBP-type domain; the sequence is KDHLFVRTEE…VLEVKTLKLP (66 aa).

It belongs to the FKBP-type PPIase family. Tig subfamily.

The protein resides in the cytoplasm. The enzyme catalyses [protein]-peptidylproline (omega=180) = [protein]-peptidylproline (omega=0). Its function is as follows. Involved in protein export. Acts as a chaperone by maintaining the newly synthesized protein in an open conformation. Functions as a peptidyl-prolyl cis-trans isomerase. The protein is Trigger factor of Thermus thermophilus (strain ATCC BAA-163 / DSM 7039 / HB27).